A 256-amino-acid polypeptide reads, in one-letter code: Ribosomal RNA small subunit methyltransferase J (256 aa).

Residues 101 to 102 (RD), 117 to 118 (ER), and Asp174 contribute to the S-adenosyl-L-methionine site.

Belongs to the methyltransferase superfamily. RsmJ family.

The protein localises to the cytoplasm. It carries out the reaction guanosine(1516) in 16S rRNA + S-adenosyl-L-methionine = N(2)-methylguanosine(1516) in 16S rRNA + S-adenosyl-L-homocysteine + H(+). Its function is as follows. Specifically methylates the guanosine in position 1516 of 16S rRNA. The protein is Ribosomal RNA small subunit methyltransferase J of Chromohalobacter salexigens (strain ATCC BAA-138 / DSM 3043 / CIP 106854 / NCIMB 13768 / 1H11).